A 633-amino-acid chain; its full sequence is Chitinase 2 (633 aa).

The GH18 domain maps to 151 to 602 (PKLSAYITDW…NAAREGLGYV (452 aa)). Residues 275 to 276 (QN) and 306 to 309 (GGWS) contribute to the chitin site. E349 serves as the catalytic Proton donor. Chitin is bound by residues Y350, 422-425 (MSYD), and W582.

This sequence belongs to the glycosyl hydrolase 18 family. In terms of assembly, semipurified toxin complex consists of at least YenA1-YenA2-YenB-YenC1-YenC2-Chi1-Chi2. The Yen-TC:K9 subcomplex is about 26 nm tall and 22 nm in diameter with 5-fold symmetry and 5 copies of YenA1, YenA2, Chi1 and Chi2; the chitinase subunits may be solvent accessible on the exterior the complex. The Yen-TC:K9 subcomplex has no insecticidal activity. The native complex with additional YenB, YenC1 and YenC2 subunits is 16 nm taller and is insecticidal; the toxicity-conferring subunits are present at about 1 copy each.

It is found in the secreted. The catalysed reaction is Random endo-hydrolysis of N-acetyl-beta-D-glucosaminide (1-&gt;4)-beta-linkages in chitin and chitodextrins.. Toxin complex is secreted when grown at 25 degrees Celsius or less; at higher temperatures the proteins are present intracellularly but not secreted. In terms of biological role, part of an orally active toxin complex (TC) with strong insecticidal effects on larvae of the Coleoptera Costelytra zealandica, Acrossidius tasmania and Adoryphorus couloni and some Lepidoptera larvae. The TC has an endochitinase activity. This subunit might aid infection by degradation of the larval peritrophic membrane. The sequence is that of Chitinase 2 from Yersinia entomophaga.